A 392-amino-acid polypeptide reads, in one-letter code: Outer membrane protein assembly factor BamB (392 aa).

Residues Met-1–Gly-19 form the signal peptide. Cys-20 carries the N-palmitoyl cysteine lipid modification. A lipid anchor (S-diacylglycerol cysteine) is attached at Cys-20.

It belongs to the BamB family. Part of the Bam complex, which is composed of the outer membrane protein BamA, and four lipoproteins BamB, BamC, BamD and BamE. Monomer. Interacts directly with BamA. The Bam complex has the shape of a hat, with the BamA beta-barrel crown in the outer membrane and the periplasmic brim formed by the BamA POTRA domains and the 4 lipoproteins.

It is found in the cell outer membrane. Functionally, part of the outer membrane protein assembly complex (Bam), which is involved in assembly and insertion of beta-barrel proteins into the outer membrane. Nonessential member of the complex, which may orient the flexible periplasmic domain of BamA for interaction with other Bam components, chaperones and nascent outer membrane proteins. Efficient substrate folding and insertion into the outer membrane requires all 5 subunits. A lateral gate may open between the first and last strands of the BamA beta-barrel that allows substrate to insert into the outer membrane; comparison of the structures of complete and nearly complete Bam complexes show there is considerable movement of all 5 proteins. The chain is Outer membrane protein assembly factor BamB from Escherichia coli (strain K12).